A 526-amino-acid chain; its full sequence is Bifunctional purine biosynthesis protein PurH (526 aa).

One can recognise an MGS-like domain in the interval 1 to 147 (MSVIKRALIS…KNWKHVAIVT (147 aa)).

This sequence belongs to the PurH family.

It catalyses the reaction (6R)-10-formyltetrahydrofolate + 5-amino-1-(5-phospho-beta-D-ribosyl)imidazole-4-carboxamide = 5-formamido-1-(5-phospho-D-ribosyl)imidazole-4-carboxamide + (6S)-5,6,7,8-tetrahydrofolate. The enzyme catalyses IMP + H2O = 5-formamido-1-(5-phospho-D-ribosyl)imidazole-4-carboxamide. It participates in purine metabolism; IMP biosynthesis via de novo pathway; 5-formamido-1-(5-phospho-D-ribosyl)imidazole-4-carboxamide from 5-amino-1-(5-phospho-D-ribosyl)imidazole-4-carboxamide (10-formyl THF route): step 1/1. The protein operates within purine metabolism; IMP biosynthesis via de novo pathway; IMP from 5-formamido-1-(5-phospho-D-ribosyl)imidazole-4-carboxamide: step 1/1. This is Bifunctional purine biosynthesis protein PurH from Neisseria gonorrhoeae (strain ATCC 700825 / FA 1090).